A 311-amino-acid polypeptide reads, in one-letter code: MHQKLLKSAHYIELGSYQYWPVLVPRGIRLYTYEQIPVSLKDNPYITDGYRAYLPSRLCIKSLFILSNETVNIWSHLLGFFLFFTLGIYDMTSVLPSASASREDFVICSICLFCFQVCMLCSVGYHLFSCHRSEKTCRRWMALDYAGISIGILGCYVSGVFYAFYCNNYWRQVYLITVLAMILAVFFAQIHPSYLTQQWQRLRPIIFCSVSGYGVIPTLHWVWLNGGVSAPIVQDFAPRVIVMYVIALLAFLFYISKVPERYFPGQLNYLGSSHQIWHVLAVVMLYWWHQSTVYVMQYRHSKPCPDYVSHL.

The tract at residues 1–20 is required for interaction with SREBF2; it reads MHQKLLKSAHYIELGSYQYW. Topologically, residues 1-70 are cytoplasmic; it reads MHQKLLKSAH…KSLFILSNET (70 aa). The segment at 41 to 60 is required for interaction with SCAP; it reads KDNPYITDGYRAYLPSRLCI. The golgi targeting stretch occupies residues 61–71; sequence KSLFILSNETV. Residues 71 to 91 traverse the membrane as a helical segment; that stretch reads VNIWSHLLGFFLFFTLGIYDM. Topologically, residues 92-104 are lumenal; sequence TSVLPSASASRED. The chain crosses the membrane as a helical span at residues 105–125; sequence FVICSICLFCFQVCMLCSVGY. The Cytoplasmic segment spans residues 126–145; the sequence is HLFSCHRSEKTCRRWMALDY. The helical transmembrane segment at 146-166 threads the bilayer; sequence AGISIGILGCYVSGVFYAFYC. At 167-172 the chain is on the lumenal side; it reads NNYWRQ. The chain crosses the membrane as a helical span at residues 173 to 193; the sequence is VYLITVLAMILAVFFAQIHPS. Over 194–203 the chain is Cytoplasmic; sequence YLTQQWQRLR. The helical transmembrane segment at 204-224 threads the bilayer; that stretch reads PIIFCSVSGYGVIPTLHWVWL. Residues 225–235 lie on the Lumenal side of the membrane; sequence NGGVSAPIVQD. The helical transmembrane segment at 236–256 threads the bilayer; it reads FAPRVIVMYVIALLAFLFYIS. The Cytoplasmic segment spans residues 257–275; it reads KVPERYFPGQLNYLGSSHQ. The helical transmembrane segment at 276-296 threads the bilayer; the sequence is IWHVLAVVMLYWWHQSTVYVM. Topologically, residues 297 to 311 are lumenal; it reads QYRHSKPCPDYVSHL. The interval 299–303 is golgi targeting; the sequence is RHSKP.

The protein belongs to the ADIPOR family. As to quaternary structure, interacts with SCAP and SREBF2; the interactions are direct, increase in low cholesterol conditions and tether SCAP:SREBP complex to the Golgi apparatus. Interaction with SCAP is mutually exclusive with INSIG1. In hepatocytes, interacts with PPARA and HUWE1; the interactions promote PPARA poylubiquitination and HUWE1-mediated degradation. In macrophages, interacts with PPARG and STUB1; the interactions promote PPARG poylubiquitination and STUB1-mediated degradation.

Its subcellular location is the golgi apparatus membrane. Golgi-anchored protein which modulates its interactors acitivies by tethering them to the Golgi apparatus. Functions as a spatial regulator of RAF1 kinase by sequestrating it to the Golgi apparatus. Acts as a positive regulator of cholesterol biosynthesis by mediating the anchoring of the SCAP:SREBP complex in the Golgi apparatus, thereby promoting SCAP:SREBF2 complex formation, potentiating SREBF2 and SREBF1 processing and enhancing lipid synthesis. Also regulates PPARA and PPARG functions by mediating their interaction with E3 ubiquitin ligases, such as STUB1 or HUWE1, leading to their polyubiquitination and proteasome-mediated degradation. The polypeptide is Progestin and adipoQ receptor family member 3 (Mus musculus (Mouse)).